The chain runs to 455 residues: Ectonucleoside triphosphate diphosphohydrolase 6 (455 aa).

At 1 to 12 (MRKIPNHGTLRM) the chain is on the cytoplasmic side. A helical; Signal-anchor for type II membrane protein membrane pass occupies residues 13 to 32 (TKVAYPLGLCVGLFIYVAYI). Topologically, residues 33–455 (KWHRASAAQA…SLKRQKVPAL (423 aa)) are lumenal. N-linked (GlcNAc...) asparagine glycosylation occurs at N192. E196 (proton acceptor) is an active-site residue. Residue N256 is glycosylated (N-linked (GlcNAc...) asparagine). Disulfide bonds link C297/C327 and C387/C401.

It belongs to the GDA1/CD39 NTPase family. Ca(2+) serves as cofactor. Requires Mg(2+) as cofactor. In terms of processing, might be cleaved at the N-terminus, retained in an intracellular membrane compartment and in addition be released into the extracellular medium. Post-translationally, N-glycosylated. As to expression, expressed in heart and brain.

It localises to the golgi apparatus membrane. The protein resides in the secreted. The protein localises to the cell membrane. It catalyses the reaction a ribonucleoside 5'-diphosphate + H2O = a ribonucleoside 5'-phosphate + phosphate + H(+). It carries out the reaction IDP + H2O = IMP + phosphate + H(+). The catalysed reaction is GDP + H2O = GMP + phosphate + H(+). The enzyme catalyses UDP + H2O = UMP + phosphate + H(+). Its function is as follows. Catalyzes the hydrolysis of nucleoside triphosphates and diphosphates in a calcium- or magnesium-dependent manner. Has a strong preference for nucleoside diphosphates, preferentially hydrolyzes GDP, IDP, and UDP, with slower hydrolysis of CDP, ITP, GTP, CTP, ADP, and UTP and virtually no hydrolysis of ATP. The membrane bound form might support glycosylation reactions in the Golgi apparatus and, when released from cells, might catalyze the hydrolysis of extracellular nucleotides. The polypeptide is Ectonucleoside triphosphate diphosphohydrolase 6 (Entpd6) (Rattus norvegicus (Rat)).